Here is a 67-residue protein sequence, read N- to C-terminus: Kappa-scoloptoxin(04)-Ssd1b (67 aa).

The first 24 residues, 1–24, serve as a signal peptide directing secretion; that stretch reads MKKTCVVSVFLVLLLLKFHDLSMG. Residues 25-36 constitute a propeptide that is removed on maturation; that stretch reads EEISPLKKVARR. 2 cysteine pairs are disulfide-bonded: cysteine 44–cysteine 55 and cysteine 49–cysteine 62.

In terms of tissue distribution, expressed by the venom gland.

Its subcellular location is the secreted. The polypeptide is Kappa-scoloptoxin(04)-Ssd1b (Scolopendra dehaani (Thai centipede)).